We begin with the raw amino-acid sequence, 593 residues long: F-box/LRR-repeat protein 17 (593 aa).

The F-box domain occupies 120 to 177 (DLDLQLDTDIVQPGRFHAVGLWEVLKRLPPSSLLMAARVCKGWRETSRKMWKAAEELR). LRR repeat units lie at residues 178-206 (IRVP…SLKI), 207-232 (ESDF…EITT), 237-262 (VNRI…KMEG), 276-304 (LSTL…SLEF), 335-361 (SLKL…SLVL), 362-387 (GINI…DLSG), 414-439 (CPNI…DCGM), 477-502 (LSLW…NLNL), and 503-525 (CSNL…YASG).

In terms of assembly, part of a SCF (ASK-cullin-F-box) protein ligase complex. Interacts with SKP1A/ASK1, KRP4, KRP6 and KRP7. In terms of tissue distribution, expressed in developing pollen.

Its subcellular location is the nucleus. It participates in protein modification; protein ubiquitination. Functionally, essential protein for male fertility. Component of the SCF(ASK-cullin-F-box) E3 ubiquitin ligase complex SCF(FBL17), which mediates the ubiquitination and subsequent proteasomal degradation of target proteins. Enables the switch in cell cycle control leading to male germ cell lineage formation from microspores after meiosis. Targets CDKA-1 inhibitors the degradation specifically in male germ cells (e.g. KRP6 and KRP7) and thus enables CDKA-1 activation and germ cell S-phase progression. Promotes twin sperm cell production and double fertilization. In Arabidopsis thaliana (Mouse-ear cress), this protein is F-box/LRR-repeat protein 17 (FBL17).